Reading from the N-terminus, the 440-residue chain is Suppressor of cytokine signaling 4 (440 aa).

A compositionally biased stretch (polar residues) spans 1-11; that stretch reads MAENSESNSKN. The segment at 1–29 is disordered; the sequence is MAENSESNSKNVDVRPKTSRSRSADRKDG. Basic and acidic residues predominate over residues 12-29; the sequence is VDVRPKTSRSRSADRKDG. Residues 286–381 form the SH2 domain; the sequence is CYWGVMDKYA…FFEPLLSTPL (96 aa). Residues 376 to 425 form the SOCS box domain; it reads LLSTPLIRTFPFSLQHICRTVICNCTTYDGIDALPIPSSMKLYLKEYHYK.

Its pathway is protein modification; protein ubiquitination. Its function is as follows. SOCS family proteins form part of a classical negative feedback system that regulates cytokine signal transduction. Substrate-recognition component of a SCF-like ECS (Elongin BC-CUL2/5-SOCS-box protein) E3 ubiquitin-protein ligase complex which mediates the ubiquitination and subsequent proteasomal degradation of target proteins. Inhibits EGF signaling by mediating the degradation of the Tyr-phosphorylated EGF receptor/EGFR. In Bos taurus (Bovine), this protein is Suppressor of cytokine signaling 4 (SOCS4).